A 101-amino-acid chain; its full sequence is NAD(P)H-quinone oxidoreductase subunit 4L, chloroplastic (101 aa).

3 helical membrane passes run 2–22 (ILEHVLVLSAYLFSIGIYGLI), 30–52 (ALMCLELLLNSVNLNFVTFSDFF), and 61–81 (IFSIFIIAIAAAEATIGLAIV).

The protein belongs to the complex I subunit 4L family. NDH is composed of at least 16 different subunits, 5 of which are encoded in the nucleus.

The protein localises to the plastid. It is found in the chloroplast thylakoid membrane. The catalysed reaction is a plastoquinone + NADH + (n+1) H(+)(in) = a plastoquinol + NAD(+) + n H(+)(out). The enzyme catalyses a plastoquinone + NADPH + (n+1) H(+)(in) = a plastoquinol + NADP(+) + n H(+)(out). Functionally, NDH shuttles electrons from NAD(P)H:plastoquinone, via FMN and iron-sulfur (Fe-S) centers, to quinones in the photosynthetic chain and possibly in a chloroplast respiratory chain. The immediate electron acceptor for the enzyme in this species is believed to be plastoquinone. Couples the redox reaction to proton translocation, and thus conserves the redox energy in a proton gradient. In Oenothera glazioviana (Large-flowered evening primrose), this protein is NAD(P)H-quinone oxidoreductase subunit 4L, chloroplastic.